Here is a 921-residue protein sequence, read N- to C-terminus: Protein translocase subunit SecA (921 aa).

ATP is bound by residues glutamine 87, 105–109 (GEGKT), and aspartate 515. Residues 575–594 (RRIDNQLRGRSGRQGDPGSS) form a disordered region. The Zn(2+) site is built by cysteine 905, cysteine 907, cysteine 916, and cysteine 917.

The protein belongs to the SecA family. Monomer and homodimer. Part of the essential Sec protein translocation apparatus which comprises SecA, SecYEG and auxiliary proteins SecDF-YajC and YidC. The cofactor is Zn(2+).

Its subcellular location is the cell inner membrane. The protein localises to the cytoplasm. The enzyme catalyses ATP + H2O + cellular proteinSide 1 = ADP + phosphate + cellular proteinSide 2.. In terms of biological role, part of the Sec protein translocase complex. Interacts with the SecYEG preprotein conducting channel. Has a central role in coupling the hydrolysis of ATP to the transfer of proteins into and across the cell membrane, serving both as a receptor for the preprotein-SecB complex and as an ATP-driven molecular motor driving the stepwise translocation of polypeptide chains across the membrane. This Polynucleobacter necessarius subsp. necessarius (strain STIR1) protein is Protein translocase subunit SecA.